Reading from the N-terminus, the 147-residue chain is Small nuclear ribonucleoprotein-associated protein B (147 aa).

The 84-residue stretch at 1–84 folds into the Sm domain; sequence MGTTKMVSLL…IVSLSVQGPP (84 aa). 2 disordered regions span residues 87-106 and 128-147; these read DPSMRGSLLSGPGVARPAGR and APPPPAGFGRGAPPPGFRPV.

It belongs to the snRNP SmB/SmN family. Belongs to the 40S cdc5-associated complex (or cwf complex), a spliceosome sub-complex reminiscent of a late-stage spliceosome composed of the U2, U5 and U6 snRNAs and at least brr2, cdc5, cwf2/prp3, cwf3/syf1, cwf4/syf3, cwf5/ecm2, spp42/cwf6, cwf7/spf27, cwf8, cwf9, cwf10, cwf11, cwf12, prp45/cwf13, cwf14, cwf15, cwf16, cwf17, cwf18, cwf19, cwf20, cwf21, cwf22, cwf23, cwf24, cwf25, cwf26, cyp7/cwf27, cwf28, cwf29/ist3, lea1, msl1, prp5/cwf1, prp10, prp12/sap130, prp17, prp22, sap61, sap62, sap114, sap145, slu7, smb1, smd1, smd3, smf1, smg1 and syf2.

It localises to the nucleus. It is found in the cytoplasm. Plays a role in pre-mRNA splicing as a core component of the spliceosomal U1, U2, U4 and U5 small nuclear ribonucleoproteins (snRNPs), the building blocks of the spliceosome. This Schizosaccharomyces pombe (strain 972 / ATCC 24843) (Fission yeast) protein is Small nuclear ribonucleoprotein-associated protein B (smb1).